The sequence spans 749 residues: MSSDTSDTRPPHSDSGTQSNSESENPIIDSPEPKAHAPLTNKDWWPEQVDVSVLHKQNDKGNPLGEDFNYAEAFAQLDLEAFKRDVIEVIQTSQDWWPADYGNYAGLFIRMSWHAAGTYRIFDGRGGAGQGSQRFAPLNSWPDNANLDKARRLLWPIKQKYGNKISWADLIAYAGNAALEQSGFKTAGFAFGREDIWEPEEMLWGQEDTWLGTDKRYGGTNEDKRELAEPFGATTMGLIYVNPEGPEGKPDPLAAAHDIRETFGRMAMNDEETAALIVGGHTLGKTHGAADVNVGPEPEGAPIEEQGLGWKCPFGTGNANDTVTSGLEVIWTGTNSEWSNRYLEILYGNEWELTKSPAGAWQFEAKNAEATIPDPFGGPPRKPTMLVTDVSMREDPIYGQITRRWLDHPEEMDEAFAKAWYKLMHRDMGPISRYLGPWVAEPEIWQDPVPDVDHELVDESDIASLKSKVLESGLTVQQLVKTAWASASSFRGTDKRGGANGARVRLEPQRSWEGNEPAELAKVLPTLEQIQQDFNASASGGKKISLADLIVLAGSAAVEKAAKDAGYEIDVHFAPGRTDASQEQTDVESFAVLETKADGFRNYIRPGQKTSVEKLLVEKAYLLDLTAPEMTALLGGLRVLNVNHGGSKHGVFTNSPGALSNDFFVNLLDMNTAWKPSENTENVFEGRDRATGEIKWTATANDLVFGSNSVLRGIAEVYAQDDSKDKFVEDFVAAWVKVMNNDRFDLEKF.

Over residues 1 to 12 the composition is skewed to basic and acidic residues; sequence MSSDTSDTRPPH. A disordered region spans residues 1–40; that stretch reads MSSDTSDTRPPHSDSGTQSNSESENPIIDSPEPKAHAPLT. Over residues 14 to 24 the composition is skewed to polar residues; sequence DSGTQSNSESE. Positions 113–240 form a cross-link, tryptophyl-tyrosyl-methioninium (Trp-Tyr) (with M-266); sequence WHAAGTYRIF…FGATTMGLIY (128 aa). Catalysis depends on H114, which acts as the Proton acceptor. Positions 240–266 form a cross-link, tryptophyl-tyrosyl-methioninium (Tyr-Met) (with W-113); the sequence is YVNPEGPEGKPDPLAAAHDIRETFGRM. H281 contributes to the heme b binding site.

The protein belongs to the peroxidase family. Peroxidase/catalase subfamily. As to quaternary structure, homodimer or homotetramer. The cofactor is heme b. Formation of the three residue Trp-Tyr-Met cross-link is important for the catalase, but not the peroxidase activity of the enzyme.

The enzyme catalyses H2O2 + AH2 = A + 2 H2O. The catalysed reaction is 2 H2O2 = O2 + 2 H2O. Functionally, bifunctional enzyme with both catalase and broad-spectrum peroxidase activity. This is Catalase-peroxidase from Mycobacterium sp. (strain JLS).